Reading from the N-terminus, the 235-residue chain is Segregation and condensation protein A (235 aa).

The protein belongs to the ScpA family. In terms of assembly, component of a cohesin-like complex composed of ScpA, ScpB and the Smc homodimer, in which ScpA and ScpB bind to the head domain of Smc. The presence of the three proteins is required for the association of the complex with DNA.

The protein localises to the cytoplasm. In terms of biological role, participates in chromosomal partition during cell division. May act via the formation of a condensin-like complex containing Smc and ScpB that pull DNA away from mid-cell into both cell halves. This Streptococcus agalactiae serotype Ia (strain ATCC 27591 / A909 / CDC SS700) protein is Segregation and condensation protein A.